A 511-amino-acid chain; its full sequence is MSKKPVALIILDGFALRDETYGNAVAQANKPNFDRYWNEYPHTTLKACGEAVGLPEGQMGNSEVGHLNIGAGRIVYQSLTRINIAIREGEFDRNETFLAAMNHVKQHGTSLHLFGLLSDGGVHSHIHHLYALLRLAAKEGVKRVYIHGFLDGRDVGPQTAPQYIKELQEKIKEYGVGEIATLSGRYYSMDRDKRWDRVEKAYRAMVYGEGPTYRDPLECIEDSYKHGIYDEFVLPSVIVREDGRPVATIQDNDAIIFYNFRPDRAIQISNTFTNEDFREFDRGPKHPKHLFFVCLTHFSETVKGYVAFKPTNLDNTIGEVLSQHGLRQLRIAETEKYPHVTFFMSGGREEKFPGEDRILINSPKVPTYDLKPEMSAYEVTDALLKEIEADKYDAIILNYANPDMVGHSGKLEPTIKAVEAVDECLGKVVDAILAKGGIAIITADHGNADEVLTPDGKPQTAHTTNPVPVIVTKKGIKLRDGGILGDLAPTMLDLLGLPQPKEMTGKSLIVK.

A Mn(2+)-binding site is contributed by aspartate 12. Residue tyrosine 36 is modified to Phosphotyrosine. Serine 62 lines the Mn(2+) pocket. The active-site Phosphoserine intermediate is serine 62. Substrate contacts are provided by residues histidine 123, 153 to 154, arginine 185, arginine 191, 261 to 264, and lysine 336; these read RD and RPDR. Aspartate 403, histidine 407, aspartate 444, histidine 445, and histidine 462 together coordinate Mn(2+).

The protein belongs to the BPG-independent phosphoglycerate mutase family. In terms of assembly, monomer. Mn(2+) serves as cofactor.

The enzyme catalyses (2R)-2-phosphoglycerate = (2R)-3-phosphoglycerate. It participates in carbohydrate degradation; glycolysis; pyruvate from D-glyceraldehyde 3-phosphate: step 3/5. Could be inhibited during sporulation by acidification of the forespore, thus allowing accumulation of the spore's large depot of 3-phosphoglyceric acid. Essential for rapid growth and for sporulation. Catalyzes the interconversion of 2-phosphoglycerate (2-PGA) and 3-phosphoglycerate (3-PGA). The chain is 2,3-bisphosphoglycerate-independent phosphoglycerate mutase from Geobacillus stearothermophilus (Bacillus stearothermophilus).